Consider the following 220-residue polypeptide: Deoxyribose-phosphate aldolase (220 aa).

Catalysis depends on aspartate 89, which acts as the Proton donor/acceptor. Catalysis depends on lysine 151, which acts as the Schiff-base intermediate with acetaldehyde. Lysine 180 (proton donor/acceptor) is an active-site residue.

This sequence belongs to the DeoC/FbaB aldolase family. DeoC type 1 subfamily.

The protein resides in the cytoplasm. It catalyses the reaction 2-deoxy-D-ribose 5-phosphate = D-glyceraldehyde 3-phosphate + acetaldehyde. The protein operates within carbohydrate degradation; 2-deoxy-D-ribose 1-phosphate degradation; D-glyceraldehyde 3-phosphate and acetaldehyde from 2-deoxy-alpha-D-ribose 1-phosphate: step 2/2. Functionally, catalyzes a reversible aldol reaction between acetaldehyde and D-glyceraldehyde 3-phosphate to generate 2-deoxy-D-ribose 5-phosphate. This chain is Deoxyribose-phosphate aldolase, found in Staphylococcus saprophyticus subsp. saprophyticus (strain ATCC 15305 / DSM 20229 / NCIMB 8711 / NCTC 7292 / S-41).